A 320-amino-acid chain; its full sequence is Methionine import ATP-binding protein MetN (320 aa).

The 236-residue stretch at 2–237 folds into the ABC transporter domain; sequence IEIKNVSKYF…PSSEMKKLIG (236 aa). Residue 34-41 coordinates ATP; sequence GHSGAGKS.

It belongs to the ABC transporter superfamily. Methionine importer (TC 3.A.1.24) family. In terms of assembly, the complex is composed of two ATP-binding proteins (MetN), two transmembrane proteins (MetI) and a solute-binding protein (MetQ).

The protein localises to the cell membrane. It catalyses the reaction L-methionine(out) + ATP + H2O = L-methionine(in) + ADP + phosphate + H(+). The enzyme catalyses D-methionine(out) + ATP + H2O = D-methionine(in) + ADP + phosphate + H(+). Functionally, part of the ABC transporter complex MetNIQ involved in methionine import. Responsible for energy coupling to the transport system. The chain is Methionine import ATP-binding protein MetN from Clostridium acetobutylicum (strain ATCC 824 / DSM 792 / JCM 1419 / IAM 19013 / LMG 5710 / NBRC 13948 / NRRL B-527 / VKM B-1787 / 2291 / W).